Consider the following 979-residue polypeptide: Protein argonaute PNH1 (979 aa).

Positions 1–95 (MLEVLDMAPP…GGRAGAGPGP (95 aa)) are disordered. Residues 54–67 (AETAAATAAVAPPE) show a composition bias toward low complexity. Residues 77–86 (GRRRGGRGRG) are compositionally biased toward basic residues. The region spanning 333–446 (PVIEFVAQIL…LPMEACKIVE (114 aa)) is the PAZ domain. Positions 620–941 (LLLAILPDNN…AAFRARFYME (322 aa)) constitute a Piwi domain.

The protein belongs to the argonaute family. Ago subfamily.

The protein localises to the cytoplasm. Its function is as follows. Probably involved in the RNA silencing pathway. May bind to short RNAs such as microRNAs (miRNAs) or short interfering RNAs (siRNAs), and represses the translation of mRNAs which are complementary to them. Plays a role in the maintenance of the indeterminate state of the stem cells in the shoot apical meristem (SAM). Regulates leaf formation through vascular development and may be involved in determining the central domain of the leaf founder region. The sequence is that of Protein argonaute PNH1 (PHN1) from Oryza sativa subsp. japonica (Rice).